Here is a 98-residue protein sequence, read N- to C-terminus: NADH-ubiquinone oxidoreductase chain 4L (98 aa).

3 helical membrane passes run 1–21 (MSLI…GLLM), 29–49 (ALLC…LTIL), and 61–81 (IILL…LVMI).

This sequence belongs to the complex I subunit 4L family. In terms of assembly, core subunit of respiratory chain NADH dehydrogenase (Complex I) which is composed of 45 different subunits.

It localises to the mitochondrion inner membrane. The enzyme catalyses a ubiquinone + NADH + 5 H(+)(in) = a ubiquinol + NAD(+) + 4 H(+)(out). In terms of biological role, core subunit of the mitochondrial membrane respiratory chain NADH dehydrogenase (Complex I) which catalyzes electron transfer from NADH through the respiratory chain, using ubiquinone as an electron acceptor. Part of the enzyme membrane arm which is embedded in the lipid bilayer and involved in proton translocation. In Berardius bairdii (Baird's beaked whale), this protein is NADH-ubiquinone oxidoreductase chain 4L (MT-ND4L).